Here is a 167-residue protein sequence, read N- to C-terminus: RNA pyrophosphohydrolase (167 aa).

The 152-residue stretch at proline 8–lysine 159 folds into the Nudix hydrolase domain. Positions glycine 47 to serine 68 match the Nudix box motif.

Belongs to the Nudix hydrolase family. RppH subfamily. It depends on a divalent metal cation as a cofactor.

Its function is as follows. Accelerates the degradation of transcripts by removing pyrophosphate from the 5'-end of triphosphorylated RNA, leading to a more labile monophosphorylated state that can stimulate subsequent ribonuclease cleavage. The protein is RNA pyrophosphohydrolase of Bradyrhizobium diazoefficiens (strain JCM 10833 / BCRC 13528 / IAM 13628 / NBRC 14792 / USDA 110).